The chain runs to 1012 residues: DNA polymerase catalytic subunit (1012 aa).

The protein belongs to the DNA polymerase type-B family.

It is found in the host nucleus. It carries out the reaction DNA(n) + a 2'-deoxyribonucleoside 5'-triphosphate = DNA(n+1) + diphosphate. This Homo sapiens (Human) protein is DNA polymerase catalytic subunit (U38).